Consider the following 123-residue polypeptide: Large ribosomal subunit protein bL12 (123 aa).

It belongs to the bacterial ribosomal protein bL12 family. Homodimer. Part of the ribosomal stalk of the 50S ribosomal subunit. Forms a multimeric L10(L12)X complex, where L10 forms an elongated spine to which 2 to 4 L12 dimers bind in a sequential fashion. Binds GTP-bound translation factors.

Functionally, forms part of the ribosomal stalk which helps the ribosome interact with GTP-bound translation factors. Is thus essential for accurate translation. This is Large ribosomal subunit protein bL12 from Hydrogenovibrio crunogenus (strain DSM 25203 / XCL-2) (Thiomicrospira crunogena).